The primary structure comprises 311 residues: MPVTSVYQKDKPFGARLNLSPFECLKIEKHSGGADALEFISNKYDALTQVLSRADILKIACHDCAAHALQAVLDYEQVFRQRGFARADIIKITGNGGGAQALKAVVVHGPTLNECGFSQADIVRIADNIGGAQALKAVLEHGPTLNERDYSGADIVKIAGNGGGARALKAVVMHGPTLCESGYSGADIVKIASNGGGAQALEAVAMHGSTLCERGYCRTDIAKIAGNGGGAQALKAIVMHGPTLCERGYSRTDIVKIADNNGGAQALKAVFEHGPALTQAGRSNEDIVNMAARTGAAGQIRKMAAQLSGRQ.

One copy of the Cryptic repeat -1 repeat lies at 19-50 (LSPFECLKIEKHSGGADALEFISNKYDALTQV). A Cryptic repeat 0 repeat occupies 51–83 (LSRADILKIACHDCAAHALQAVLDYEQVFRQRG). Core repeat repeat units lie at residues 84 to 116 (FARA…NECG), 117 to 149 (FSQA…NERD), 150 to 182 (YSGA…CESG), 183 to 215 (YSGA…CERG), 216 to 248 (YCRT…CERG), and 249 to 281 (YSRT…TQAG). One copy of the Cryptic repeat +1 repeat lies at 282–311 (RSNEDIVNMAARTGAAGQIRKMAAQLSGRQ).

The protein belongs to the transcription activator-like effector (TALE) family. Bat subfamily.

In terms of biological role, does not bind DNA, probably because it has too few core repeats. The polypeptide is Burkholderia TALE-like protein 3 (Mycetohabitans rhizoxinica (strain DSM 19002 / CIP 109453 / HKI 454) (Paraburkholderia rhizoxinica)).